Reading from the N-terminus, the 393-residue chain is tRNA(Met) cytidine acetate ligase (393 aa).

Residues Gly81, Asn142, and Arg167 each contribute to the ATP site.

This sequence belongs to the TmcAL family.

The protein resides in the cytoplasm. The enzyme catalyses cytidine(34) in elongator tRNA(Met) + acetate + ATP = N(4)-acetylcytidine(34) in elongator tRNA(Met) + AMP + diphosphate. In terms of biological role, catalyzes the formation of N(4)-acetylcytidine (ac(4)C) at the wobble position of elongator tRNA(Met), using acetate and ATP as substrates. First activates an acetate ion to form acetyladenylate (Ac-AMP) and then transfers the acetyl group to tRNA to form ac(4)C34. The polypeptide is tRNA(Met) cytidine acetate ligase (Bacillus mycoides (strain KBAB4) (Bacillus weihenstephanensis)).